The sequence spans 510 residues: Probable inositol 3-phosphate synthase isozyme 3 (510 aa).

This sequence belongs to the myo-inositol 1-phosphate synthase family. It depends on NAD(+) as a cofactor. In terms of tissue distribution, expressed in siliques, leaves, roots, seed endosperm, but not in embryos. Highest expression in roots. Confined to vascular tissue and hydathodes of leaves.

Its subcellular location is the cytoplasm. The enzyme catalyses D-glucose 6-phosphate = 1D-myo-inositol 3-phosphate. It participates in polyol metabolism; myo-inositol biosynthesis; myo-inositol from D-glucose 6-phosphate: step 1/2. Functionally, key enzyme in myo-inositol biosynthesis pathway that catalyzes the conversion of glucose 6-phosphate to 1-myo-inositol 1-phosphate in a NAD-dependent manner. This chain is Probable inositol 3-phosphate synthase isozyme 3 (IPS3), found in Arabidopsis thaliana (Mouse-ear cress).